We begin with the raw amino-acid sequence, 350 residues long: Probable dual-specificity RNA methyltransferase RlmN (350 aa).

Glu98 acts as the Proton acceptor in catalysis. Residues 104-334 enclose the Radical SAM core domain; it reads HTYGNSVCVS…VTVRRELGGD (231 aa). Residues Cys111 and Cys339 are joined by a disulfide bond. Positions 118, 122, and 125 each coordinate [4Fe-4S] cluster. S-adenosyl-L-methionine is bound by residues 165-166, Ser197, 220-222, and Asn296; these read GE and SLH. Residue Cys339 is the S-methylcysteine intermediate of the active site.

It belongs to the radical SAM superfamily. RlmN family. [4Fe-4S] cluster is required as a cofactor.

It is found in the cytoplasm. It carries out the reaction adenosine(2503) in 23S rRNA + 2 reduced [2Fe-2S]-[ferredoxin] + 2 S-adenosyl-L-methionine = 2-methyladenosine(2503) in 23S rRNA + 5'-deoxyadenosine + L-methionine + 2 oxidized [2Fe-2S]-[ferredoxin] + S-adenosyl-L-homocysteine. The catalysed reaction is adenosine(37) in tRNA + 2 reduced [2Fe-2S]-[ferredoxin] + 2 S-adenosyl-L-methionine = 2-methyladenosine(37) in tRNA + 5'-deoxyadenosine + L-methionine + 2 oxidized [2Fe-2S]-[ferredoxin] + S-adenosyl-L-homocysteine. Functionally, specifically methylates position 2 of adenine 2503 in 23S rRNA and position 2 of adenine 37 in tRNAs. This chain is Probable dual-specificity RNA methyltransferase RlmN, found in Desulforamulus reducens (strain ATCC BAA-1160 / DSM 100696 / MI-1) (Desulfotomaculum reducens).